Reading from the N-terminus, the 229-residue chain is UPF0488 protein C8orf33 (229 aa).

A compositionally biased stretch (low complexity) spans 1 to 16 (MAALGHLAGEAAAAPG). Residues 1-96 (MAALGHLAGE…GEKASEKLAP (96 aa)) are disordered. Alanine 2 carries the N-acetylalanine modification. Omega-N-methylarginine is present on arginine 27. Residues 69–79 (KKQKNKKKTRN) are compositionally biased toward basic residues. Residue serine 82 is modified to Phosphoserine.

This sequence belongs to the UPF0488 family.

The sequence is that of UPF0488 protein C8orf33 (C8orf33) from Homo sapiens (Human).